The sequence spans 176 residues: Ribosome maturation factor RimM (176 aa).

The PRC barrel domain maps to 99 to 174 (KDEFYVRDLI…IVLIQPELWN (76 aa)).

This sequence belongs to the RimM family. Binds ribosomal protein uS19.

The protein localises to the cytoplasm. An accessory protein needed during the final step in the assembly of 30S ribosomal subunit, possibly for assembly of the head region. Essential for efficient processing of 16S rRNA. May be needed both before and after RbfA during the maturation of 16S rRNA. It has affinity for free ribosomal 30S subunits but not for 70S ribosomes. The sequence is that of Ribosome maturation factor RimM from Leptospira borgpetersenii serovar Hardjo-bovis (strain JB197).